The primary structure comprises 208 residues: Ion-translocating oxidoreductase complex subunit G (208 aa).

A helical membrane pass occupies residues G9 to L29. The residue at position 174 (T174) is an FMN phosphoryl threonine.

Belongs to the RnfG family. As to quaternary structure, the complex is composed of six subunits: RnfA, RnfB, RnfC, RnfD, RnfE and RnfG. FMN serves as cofactor.

The protein resides in the cell inner membrane. Its function is as follows. Part of a membrane-bound complex that couples electron transfer with translocation of ions across the membrane. This Cronobacter sakazakii (strain ATCC BAA-894) (Enterobacter sakazakii) protein is Ion-translocating oxidoreductase complex subunit G.